Here is a 293-residue protein sequence, read N- to C-terminus: Mitochondrial glycine transporter (293 aa).

3 Solcar repeats span residues 6-85, 102-186, and 208-291; these read GGVP…SRSA, LQSY…AKEM, and ASAM…LLKL. A run of 6 helical transmembrane segments spans residues 12-37, 60-86, 108-133, 161-184, 212-238, and 266-284; these read LVSG…TRLQ, GTLP…RSAL, LLTG…VRYE, GAAA…EQAK, VNGV…KTRM, and GLSL…AWGI.

Belongs to the mitochondrial carrier (TC 2.A.29) family. SLC25A38 subfamily.

It localises to the mitochondrion inner membrane. The catalysed reaction is glycine(in) = glycine(out). In terms of biological role, mitochondrial glycine transporter that imports glycine into the mitochondrial matrix. Plays an important role in providing glycine for the first enzymatic step in heme biosynthesis, the condensation of glycine with succinyl-CoA to produce 5-aminolevulinate (ALA) in the mitochondrial matrix. In Eremothecium gossypii (strain ATCC 10895 / CBS 109.51 / FGSC 9923 / NRRL Y-1056) (Yeast), this protein is Mitochondrial glycine transporter.